The sequence spans 71 residues: Small ribosomal subunit protein bS18 (71 aa).

This sequence belongs to the bacterial ribosomal protein bS18 family. Part of the 30S ribosomal subunit. Forms a tight heterodimer with protein bS6.

Binds as a heterodimer with protein bS6 to the central domain of the 16S rRNA, where it helps stabilize the platform of the 30S subunit. This is Small ribosomal subunit protein bS18 from Acaryochloris marina (strain MBIC 11017).